Consider the following 298-residue polypeptide: Putative olfactory receptor 10D4 (298 aa).

The Extracellular segment spans residues 1-23; the sequence is MRNHTMVTEFILLGIPETEGLET. Asn3 carries an N-linked (GlcNAc...) asparagine glycan. The helical transmembrane segment at 24–44 threads the bilayer; sequence ALLFLFSSFYLCTLLGNVLIL. The Cytoplasmic segment spans residues 45–52; sequence TAIISSTR. Residues 53-73 traverse the membrane as a helical segment; it reads LHTPMYFFLGNLSIFDLGFSS. The Extracellular segment spans residues 74–97; that stretch reads TTVPKMLFYLSGNSHAISYAGCVS. Cys95 and Cys187 form a disulfide bridge. A helical transmembrane segment spans residues 98 to 118; the sequence is QLFFYHFLGCTECFLYTVMAC. Residues 119–137 are Cytoplasmic-facing; the sequence is DRFVAICFPLRYTVIMNHR. Residues 138 to 158 traverse the membrane as a helical segment; that stretch reads VCFMLATGTWMIGCVHAMILT. Over 159 to 195 the chain is Extracellular; sequence PLTFQLPYCGPNKVGYYFCDIPAVLPLACKDTSLAQR. A helical membrane pass occupies residues 196 to 215; the sequence is VGFTNVGLLSLICFFLILVS. Residues 216–235 are Cytoplasmic-facing; that stretch reads YTCIGISISKIRSAEGRQRA. A helical transmembrane segment spans residues 236 to 256; sequence FSTCSAHLTAILCAYGPVIVI. At 257–267 the chain is on the extracellular side; the sequence is YLQPNPSALLG. The chain crosses the membrane as a helical span at residues 268-288; that stretch reads SIIQILNNLVTPMLNPLIYSL. Residues 289 to 298 are Cytoplasmic-facing; sequence RNKDVKSDQP.

It belongs to the G-protein coupled receptor 1 family.

Its subcellular location is the cell membrane. Odorant receptor. This Homo sapiens (Human) protein is Putative olfactory receptor 10D4 (OR10D4P).